We begin with the raw amino-acid sequence, 294 residues long: Putative immediate early glycoprotein (294 aa).

Residues 1 to 21 form the signal peptide; it reads MKKLTMESLLVYTFVMGVCFT. The helical transmembrane segment at 262–282 threads the bilayer; sequence LFFLAGGAFTMLLLLCCLSMI.

It belongs to the herpesviridae immediate early glycoprotein family.

It localises to the host membrane. This is Putative immediate early glycoprotein (U18) from Homo sapiens (Human).